The sequence spans 667 residues: tRNA 5-methylaminomethyl-2-thiouridine biosynthesis bifunctional protein MnmC (667 aa).

The interval 1 to 215 (MKFINGILFN…KREMIRAYFN (215 aa)) is tRNA (mnm(5)s(2)U34)-methyltransferase. Residues 240–667 (IGAGIAGIVT…LIRKLKKGLK (428 aa)) form an FAD-dependent cmnm(5)s(2)U34 oxidoreductase region.

This sequence in the N-terminal section; belongs to the methyltransferase superfamily. tRNA (mnm(5)s(2)U34)-methyltransferase family. It in the C-terminal section; belongs to the DAO family. FAD is required as a cofactor.

The protein resides in the cytoplasm. The enzyme catalyses 5-aminomethyl-2-thiouridine(34) in tRNA + S-adenosyl-L-methionine = 5-methylaminomethyl-2-thiouridine(34) in tRNA + S-adenosyl-L-homocysteine + H(+). In terms of biological role, catalyzes the last two steps in the biosynthesis of 5-methylaminomethyl-2-thiouridine (mnm(5)s(2)U) at the wobble position (U34) in tRNA. Catalyzes the FAD-dependent demodification of cmnm(5)s(2)U34 to nm(5)s(2)U34, followed by the transfer of a methyl group from S-adenosyl-L-methionine to nm(5)s(2)U34, to form mnm(5)s(2)U34. In Campylobacter hominis (strain ATCC BAA-381 / DSM 21671 / CCUG 45161 / LMG 19568 / NCTC 13146 / CH001A), this protein is tRNA 5-methylaminomethyl-2-thiouridine biosynthesis bifunctional protein MnmC.